The sequence spans 221 residues: MHRVAVVTLRGYREWTESLGPRREHIIQRVQAGLHMALWRHFTSIGAFPHHTRYDAAVALVNNIPTTLIEKAVDKLKKASPVPVEYCIGTGPTPYEAYLSCGEAAGDGDNYAVLAHMDMVDSTHVTRANGPLHVYLQILHIISDLGDLCKRLGCIALYLGGDNVAVLLPEPKAAYEIAERVPVPVRVGVGVAKRPYTAFVKATKALDYLRSHGVVGVKVLK.

The protein belongs to the archaeal-type GTP cyclohydrolase family.

It carries out the reaction GTP + 3 H2O = 2-amino-5-formylamino-6-(5-phospho-D-ribosylamino)pyrimidin-4(3H)-one + 2 phosphate + 2 H(+). In terms of biological role, catalyzes the formation of 2-amino-5-formylamino-6-ribofuranosylamino-4(3H)-pyrimidinone ribonucleotide monophosphate and inorganic phosphate from GTP. Also has an independent pyrophosphate phosphohydrolase activity. The sequence is that of GTP cyclohydrolase III from Pyrobaculum calidifontis (strain DSM 21063 / JCM 11548 / VA1).